Reading from the N-terminus, the 221-residue chain is Cytidylate kinase (221 aa).

An ATP-binding site is contributed by 7–15 (GPSASGKSS).

This sequence belongs to the cytidylate kinase family. Type 1 subfamily.

It is found in the cytoplasm. The enzyme catalyses CMP + ATP = CDP + ADP. The catalysed reaction is dCMP + ATP = dCDP + ADP. The sequence is that of Cytidylate kinase from Borreliella burgdorferi (strain ZS7) (Borrelia burgdorferi).